The following is a 569-amino-acid chain: Aspartate--tRNA ligase, cytoplasmic 2 (569 aa).

Positions 1-23 (MSEENNHKEKSKNEIKKEKKKIE) are disordered. Residues 292-295 (QFYR) form an aspartate region. L-aspartate is bound at residue Arg-314. ATP contacts are provided by residues 314–316 (RTD) and 322–324 (RHL). 2 residues coordinate L-aspartate: Ser-475 and Arg-479. Residue 540–543 (GLER) coordinates ATP.

The protein belongs to the class-II aminoacyl-tRNA synthetase family. Type 2 subfamily.

It localises to the cytoplasm. The catalysed reaction is tRNA(Asp) + L-aspartate + ATP = L-aspartyl-tRNA(Asp) + AMP + diphosphate. In Dictyostelium discoideum (Social amoeba), this protein is Aspartate--tRNA ligase, cytoplasmic 2 (aspS2).